We begin with the raw amino-acid sequence, 325 residues long: MMEVMDILRKYSEMADERIRESISDITPETLLRASEHLITAGGKKIRPSLALLSSEAVGGDPGDAAGVAAAIELIHTFSLIHDDIMDDDEIRRGEPAVHVLWGEPMAILAGDVLFSKAFEAVIRNGDSEMVKEALAVVVDSCVKICEGQALDMGFEERLDVTEEEYMEMIYKKTAALIAAATKAGAIMGGGSPQEIAALEDYGRCIGLAFQIHDDYLDVVSDEESLGKPVGSDIAEGKMTLMVVKALERASEKDRERLISILGSGDEKLVAEAIEIFERYGATEYAHAVALDHVRMAKERLEVLEESDAREALAMIADFVLEREH.

Positions 44, 47, and 76 each coordinate isopentenyl diphosphate. 2 residues coordinate Mg(2+): Asp-83 and Asp-87. Arg-92 is an an all-trans-polyprenyl diphosphate binding site. Isopentenyl diphosphate is bound at residue Arg-93. An all-trans-polyprenyl diphosphate-binding residues include Lys-173, Thr-174, Gln-211, Lys-228, and Lys-238.

This sequence belongs to the FPP/GGPP synthase family. Homodimer. It depends on Mg(2+) as a cofactor.

The protein resides in the cytoplasm. In Methanothermobacter thermautotrophicus (strain ATCC 29096 / DSM 1053 / JCM 10044 / NBRC 100330 / Delta H) (Methanobacterium thermoautotrophicum), this protein is Short chain isoprenyl diphosphate synthase (idsA).